The primary structure comprises 218 residues: ATP phosphoribosyltransferase (218 aa).

The protein belongs to the ATP phosphoribosyltransferase family. Short subfamily. Heteromultimer composed of HisG and HisZ subunits.

Its subcellular location is the cytoplasm. It catalyses the reaction 1-(5-phospho-beta-D-ribosyl)-ATP + diphosphate = 5-phospho-alpha-D-ribose 1-diphosphate + ATP. It functions in the pathway amino-acid biosynthesis; L-histidine biosynthesis; L-histidine from 5-phospho-alpha-D-ribose 1-diphosphate: step 1/9. In terms of biological role, catalyzes the condensation of ATP and 5-phosphoribose 1-diphosphate to form N'-(5'-phosphoribosyl)-ATP (PR-ATP). Has a crucial role in the pathway because the rate of histidine biosynthesis seems to be controlled primarily by regulation of HisG enzymatic activity. This Trichormus variabilis (strain ATCC 29413 / PCC 7937) (Anabaena variabilis) protein is ATP phosphoribosyltransferase.